Reading from the N-terminus, the 370-residue chain is GTPase Obg (370 aa).

The 159-residue stretch at 1-159 (MKFIDEARIE…RKLKLELKVL (159 aa)) folds into the Obg domain. Residues 129–148 (HFKSSTNRAPRQKTNGKSGE) are disordered. Residues 130–145 (FKSSTNRAPRQKTNGK) are compositionally biased toward polar residues. The OBG-type G domain occupies 160 to 334 (ADVGLLGMPN…LCYSLQDYLD (175 aa)). GTP-binding positions include 166-173 (GMPNAGKS), 191-195 (FTTLH), 213-216 (DIPG), 284-287 (NKVD), and 315-317 (SAL). The Mg(2+) site is built by S173 and T193.

This sequence belongs to the TRAFAC class OBG-HflX-like GTPase superfamily. OBG GTPase family. In terms of assembly, monomer. Requires Mg(2+) as cofactor.

Its subcellular location is the cytoplasm. Its function is as follows. An essential GTPase which binds GTP, GDP and possibly (p)ppGpp with moderate affinity, with high nucleotide exchange rates and a fairly low GTP hydrolysis rate. Plays a role in control of the cell cycle, stress response, ribosome biogenesis and in those bacteria that undergo differentiation, in morphogenesis control. The protein is GTPase Obg of Polynucleobacter necessarius subsp. necessarius (strain STIR1).